We begin with the raw amino-acid sequence, 572 residues long: MVNTNNHISEELDKNLDEMEFLKANSDFLRGTIEQSLANPITGSITQDDAKLLKFHGSYMQDDRDLRDERRKQKLEPAYSFMIRVRVPGGKATPEQWIAMDDISNQYANHTIKLTTRQAFQFHGILKRNLKQSMKNINHAVLDSIAACGDVNRNTMCNPNPYQSQVHKEINDYATRISNHLLPRTNAYHEIWLDGEKVLDSSEEKEPIYGNTYLPRKFKIGIAVPPSNDIDVYSQDIGLIAIVEQDELIGFNVTIGGGMGMTHGITETYPQLGRLIGFIPKEKVVDVCEKILTIQRDYGNRENRKNARFKYTVDRLGETWVTEELNRRLGWEIKAPRDFEFEHNGDRLGWIEGINNWNFTLFIQNGRVKDTEDYLLKTALREIAEIHTGDFRLSPNQNLVIANVSPEKKEEIQAIIDKYKLTDGKNYTGLRRNSMACVAFPTCGLAMAESERYLPSLITKIEDLLDESGLKEEEITIRMTGCPNGCARPALAEIAFIGKAPGKYNMYLGGSFKGERLNKIYKENIDENEILESLRPLLLRYSKERLDGEHFGDFVIRDGVIAKVHDGRDFHS.

4 residues coordinate [4Fe-4S] cluster: C437, C443, C482, and C486. A siroheme-binding site is contributed by C486.

Belongs to the nitrite and sulfite reductase 4Fe-4S domain family. As to quaternary structure, alpha(8)-beta(8). The alpha component is a flavoprotein, the beta component is a hemoprotein. The cofactor is siroheme. [4Fe-4S] cluster is required as a cofactor.

It carries out the reaction hydrogen sulfide + 3 NADP(+) + 3 H2O = sulfite + 3 NADPH + 4 H(+). The protein operates within sulfur metabolism; hydrogen sulfide biosynthesis; hydrogen sulfide from sulfite (NADPH route): step 1/1. Component of the sulfite reductase complex that catalyzes the 6-electron reduction of sulfite to sulfide. This is one of several activities required for the biosynthesis of L-cysteine from sulfate. The sequence is that of Sulfite reductase [NADPH] hemoprotein beta-component from Staphylococcus epidermidis (strain ATCC 12228 / FDA PCI 1200).